The primary structure comprises 140 residues: Class I hydrophobin 1 (140 aa).

An N-terminal signal peptide occupies residues 1-18 (MKFAAVVVLAAAAAAVSA). The interval 22–60 (AQRMARGLPPKAPIRRHGTPADTEKRSHPSSTGGGQCNT) is disordered. 4 disulfide bridges follow: Cys58–Cys119, Cys65–Cys113, Cys66–Cys99, and Cys120–Cys133.

Belongs to the fungal hydrophobin family. As to quaternary structure, self-assembles to form functional amyloid fibrils called rodlets. Self-assembly into fibrillar rodlets occurs spontaneously at hydrophobic:hydrophilic interfaces and the rodlets further associate laterally to form amphipathic monolayers.

Its subcellular location is the secreted. It is found in the cell wall. Its function is as follows. Aerial growth, conidiation, and dispersal of filamentous fungi in the environment rely upon a capability of their secreting small amphipathic proteins called hydrophobins (HPBs) with low sequence identity. Class I can self-assemble into an outermost layer of rodlet bundles on aerial cell surfaces, conferring cellular hydrophobicity that supports fungal growth, development and dispersal; whereas Class II form highly ordered films at water-air interfaces through intermolecular interactions but contribute nothing to the rodlet structure. The polypeptide is Class I hydrophobin 1 (Pisolithus tinctorius (Dead man's foot)).